A 977-amino-acid chain; its full sequence is Glycine dehydrogenase (decarboxylating) (977 aa).

Lysine 702 is subject to N6-(pyridoxal phosphate)lysine.

Belongs to the GcvP family. As to quaternary structure, the glycine cleavage system is composed of four proteins: P, T, L and H. The cofactor is pyridoxal 5'-phosphate.

It carries out the reaction N(6)-[(R)-lipoyl]-L-lysyl-[glycine-cleavage complex H protein] + glycine + H(+) = N(6)-[(R)-S(8)-aminomethyldihydrolipoyl]-L-lysyl-[glycine-cleavage complex H protein] + CO2. Its function is as follows. The glycine cleavage system catalyzes the degradation of glycine. The P protein binds the alpha-amino group of glycine through its pyridoxal phosphate cofactor; CO(2) is released and the remaining methylamine moiety is then transferred to the lipoamide cofactor of the H protein. The polypeptide is Glycine dehydrogenase (decarboxylating) (Xanthomonas axonopodis pv. citri (strain 306)).